A 332-amino-acid polypeptide reads, in one-letter code: Ribosomal RNA small subunit methyltransferase H (332 aa).

S-adenosyl-L-methionine is bound by residues 37–39, Asp-55, Phe-82, Asp-103, and Gln-110; that span reads GGY. Residues 281-332 form a disordered region; sequence TKRPVTPSDEETAANPRARSAKLRAGERTAAPAQPEAPLPHWPTLASVMGRR.

It belongs to the methyltransferase superfamily. RsmH family.

Its subcellular location is the cytoplasm. It carries out the reaction cytidine(1402) in 16S rRNA + S-adenosyl-L-methionine = N(4)-methylcytidine(1402) in 16S rRNA + S-adenosyl-L-homocysteine + H(+). Functionally, specifically methylates the N4 position of cytidine in position 1402 (C1402) of 16S rRNA. The protein is Ribosomal RNA small subunit methyltransferase H of Rhodopseudomonas palustris (strain BisA53).